The following is a 396-amino-acid chain: MKLLTLKKAHAAKIKKGYPLIEKEALAGSAGHMKEGDLVDIVSESGGEFLARGYYGLQNKGVGWTLTRNKHEQIDQAFFLSKLTKAAQARAKLFEAQDTTAFRLFNGEGDGVGGVTIDYYDGYLLIQWYSKGIYTFKDMLISALDEMDLDYKAIYEKKRFDTAGQYVEDDDFVKGRRGEFPIIIQENGIQYAVDLNEGAMTGIFLDQRHVRKAIRDRYAKGKTVLNTFSYTGAFSVAAALGGAEKTTSVDVANRSLAKTIEQFSVNKLDYEAHDIKVMDVFNYFSYAAKKDLRFDLIILDPPSFARTKKRTFSAAKDYKNLLKETIAITADKGVIVASTNSSAFGMKKFKGFIDAAFKETNERYTIIEEFTLPEDFKTISAFPEGNYLKVVLLQKK.

Residues 1–79 (MKLLTLKKAH…KHEQIDQAFF (79 aa)) form the PUA domain.

Belongs to the methyltransferase superfamily. RlmI family.

Its subcellular location is the cytoplasm. In Bacillus subtilis (strain 168), this protein is Putative ribosomal RNA large subunit methyltransferase YwbD (ywbD).